A 144-amino-acid chain; its full sequence is Large ribosomal subunit protein uL15 (144 aa).

The disordered stretch occupies residues 1–53 (MRLNTLSPADGSKHAPKRLGRGIGSGLGKTGGRGHKGQNSRSGGGVRRGFEGG). Gly residues predominate over residues 21-31 (RGIGSGLGKTG).

The protein belongs to the universal ribosomal protein uL15 family. As to quaternary structure, part of the 50S ribosomal subunit.

Its function is as follows. Binds to the 23S rRNA. This chain is Large ribosomal subunit protein uL15, found in Erwinia tasmaniensis (strain DSM 17950 / CFBP 7177 / CIP 109463 / NCPPB 4357 / Et1/99).